Consider the following 135-residue polypeptide: Interleukin-4 (135 aa).

The first 24 residues, Met1–Gly24, serve as a signal peptide directing secretion. Intrachain disulfides connect Cys27/Cys135, Cys48/Cys85, and Cys70/Cys105. A glycan (N-linked (GlcNAc...) asparagine) is linked at Asn62.

This sequence belongs to the IL-4/IL-13 family.

It localises to the secreted. In terms of biological role, participates in at least several B-cell activation processes as well as of other cell types. It is a costimulator of DNA-synthesis. It induces the expression of class II MHC molecules on resting B-cells. It enhances both secretion and cell surface expression of IgE and IgG1. It also regulates the expression of the low affinity Fc receptor for IgE (CD23) on both lymphocytes and monocytes. Positively regulates IL31RA expression in macrophages. Stimulates autophagy in dendritic cells by interfering with mTORC1 signaling and through the induction of RUFY4. This is Interleukin-4 (IL4) from Bos taurus (Bovine).